A 303-amino-acid chain; its full sequence is Taste receptor type 2 member 13 (303 aa).

Over 1 to 7 the chain is Extracellular; the sequence is MESALPS. Residues 8–28 traverse the membrane as a helical segment; that stretch reads IFTLVIIAEFIIGNLSNGFIV. Residues 29-55 lie on the Cytoplasmic side of the membrane; that stretch reads LINCIDWVSKRELSSVDKLLIILAISR. A helical membrane pass occupies residues 56–76; that stretch reads IGLIWEILVSWFLALHSLAIF. At 77-85 the chain is on the extracellular side; sequence VSGTGLRIM. A helical membrane pass occupies residues 86–106; that stretch reads IFSWIVSNHFNLWLATILSIF. The Cytoplasmic segment spans residues 107-128; that stretch reads YLLKIASFSSPAFLYLKRRVNK. The helical transmembrane segment at 129-149 threads the bilayer; it reads VILMILLGTLVFLFLNLIQIN. Residues 150 to 184 are Extracellular-facing; it reads MLIKDWLDRYERNTTWNFSMSDFETFSVSVRFTMT. Asn-162 and Asn-166 each carry an N-linked (GlcNAc...) asparagine glycan. A helical membrane pass occupies residues 185 to 205; the sequence is MFSLTPFTVAFISFLLLVFSL. Residues 206 to 232 are Cytoplasmic-facing; that stretch reads QKHLQKMQLNYKGHRDPRTKVHTNALK. A helical transmembrane segment spans residues 233 to 253; the sequence is IVISFLLLYASFFLSILISWI. At 254–261 the chain is on the extracellular side; that stretch reads SELYQNTV. The helical transmembrane segment at 262 to 282 threads the bilayer; the sequence is IYMLCETIGAFYPSSHSFLLI. Residues 283 to 303 lie on the Cytoplasmic side of the membrane; sequence LGNAKLRQAFLLVAAKVWAKR.

This sequence belongs to the G-protein coupled receptor T2R family.

The protein localises to the membrane. Functionally, receptor that may play a role in the perception of bitterness and is gustducin-linked. May play a role in sensing the chemical composition of the gastrointestinal content. The activity of this receptor may stimulate alpha gustducin, mediate PLC-beta-2 activation and lead to the gating of TRPM5. In Pan troglodytes (Chimpanzee), this protein is Taste receptor type 2 member 13 (TAS2R13).